The following is an 875-amino-acid chain: Leucine--tRNA ligase (875 aa).

The short motif at 43 to 53 (PYPSGRIHIGH) is the 'HIGH' region element. The 'KMSKS' region signature appears at 631–635 (KMSKS). K634 serves as a coordination point for ATP.

Belongs to the class-I aminoacyl-tRNA synthetase family.

It is found in the cytoplasm. It carries out the reaction tRNA(Leu) + L-leucine + ATP = L-leucyl-tRNA(Leu) + AMP + diphosphate. This chain is Leucine--tRNA ligase, found in Mesorhizobium japonicum (strain LMG 29417 / CECT 9101 / MAFF 303099) (Mesorhizobium loti (strain MAFF 303099)).